We begin with the raw amino-acid sequence, 277 residues long: Inorganic pyrophosphatase (277 aa).

Arginine 80 is a diphosphate binding site. Aspartate 117, aspartate 122, and aspartate 154 together coordinate Mg(2+).

The protein belongs to the PPase family. Requires Mg(2+) as cofactor.

The protein resides in the cytoplasm. The catalysed reaction is diphosphate + H2O = 2 phosphate + H(+). In terms of biological role, involved in osmoadaptation. This Encephalitozoon cuniculi (strain GB-M1) (Microsporidian parasite) protein is Inorganic pyrophosphatase (IPP1).